The primary structure comprises 232 residues: Orotate phosphoribosyltransferase (232 aa).

5-phospho-alpha-D-ribose 1-diphosphate is bound at residue Lys-28. Position 36 to 37 (36 to 37 (FF)) interacts with orotate. Residues 78–79 (YK), Arg-108, Lys-109, Lys-112, His-114, and 134–142 (DDVITAGTA) each bind 5-phospho-alpha-D-ribose 1-diphosphate. 2 residues coordinate orotate: Thr-138 and Arg-166.

Belongs to the purine/pyrimidine phosphoribosyltransferase family. PyrE subfamily. Homodimer.

It carries out the reaction orotidine 5'-phosphate + diphosphate = orotate + 5-phospho-alpha-D-ribose 1-diphosphate. It functions in the pathway pyrimidine metabolism; UMP biosynthesis via de novo pathway; UMP from orotate: step 1/2. In terms of biological role, catalyzes the transfer of a ribosyl phosphate group from 5-phosphoribose 1-diphosphate to orotate, leading to the formation of orotidine monophosphate (OMP). This Sordaria macrospora protein is Orotate phosphoribosyltransferase (URA5).